The chain runs to 428 residues: Ribosomal RNA small subunit methyltransferase B (428 aa).

Residues 253–259 (CAAPGGK), Asp276, Asp302, and Asp321 contribute to the S-adenosyl-L-methionine site. Cys374 (nucleophile) is an active-site residue.

This sequence belongs to the class I-like SAM-binding methyltransferase superfamily. RsmB/NOP family.

The protein localises to the cytoplasm. The catalysed reaction is cytidine(967) in 16S rRNA + S-adenosyl-L-methionine = 5-methylcytidine(967) in 16S rRNA + S-adenosyl-L-homocysteine + H(+). In terms of biological role, specifically methylates the cytosine at position 967 (m5C967) of 16S rRNA. The sequence is that of Ribosomal RNA small subunit methyltransferase B from Citrobacter koseri (strain ATCC BAA-895 / CDC 4225-83 / SGSC4696).